The sequence spans 896 residues: Protein argonaute 9 (896 aa).

The PAZ domain occupies proline 267–serine 380. The region spanning phenylalanine 550 to lysine 857 is the Piwi domain.

This sequence belongs to the argonaute family. Ago subfamily. In terms of tissue distribution, expressed in embryonic shoot apex region, pollen and developing ovules.

Functionally, involved in RNA-mediated post-transcriptional gene silencing (PTGS). Main component of the RNA-induced silencing complex (RISC) that binds to a short guide RNA such as a microRNA (miRNA) or small interfering RNA (siRNA). RISC uses the mature miRNA or siRNA as a guide for slicer-directed cleavage of homologous mRNAs to repress gene expression. Associates preferentially with small RNAs of 24 nucleotide in length with a 5' terminal adenosine. Interacts with 24 nucleotide sRNAs derived from transposable elements (TEs). Required to silence pericentrometric-located TEs in female gametes and their accessory cells. Necessary to inactivate a significant proportion of long terminal repeat retrotransposons (LTRs) in the ovule. Required to specify cell fate in ovule. Involved in the control of female gamete formation by restricting the specification of gametophyte precursors in a dosage-dependent, non-cell-autonomous manner. Targeted by turnip yellows virus (TuYV) protein P0 (via F-box-like domain) for probable proteasome degradation and thereby inactivating AGO9 function in RNA silencing. In Arabidopsis thaliana (Mouse-ear cress), this protein is Protein argonaute 9 (AGO9).